We begin with the raw amino-acid sequence, 257 residues long: Large ribosomal subunit protein bL28m (257 aa).

The transit peptide at 1 to 55 (MPLHRYPVHLWQKLRLRQGICARLPAHFLRSLEEERTPTPVHYKPHGTKFKINPK) directs the protein to the mitochondrion.

The protein belongs to the bacterial ribosomal protein bL28 family. Component of the mitochondrial ribosome large subunit (39S) which comprises a 16S rRNA and about 50 distinct proteins. Interacts with OXA1L.

Its subcellular location is the mitochondrion. This Mus musculus (Mouse) protein is Large ribosomal subunit protein bL28m (Mrpl28).